Consider the following 181-residue polypeptide: Large ribosomal subunit protein uL5 (181 aa).

The protein belongs to the universal ribosomal protein uL5 family. Part of the 50S ribosomal subunit; part of the 5S rRNA/L5/L18/L25 subcomplex. Contacts the 5S rRNA and the P site tRNA. Forms a bridge to the 30S subunit in the 70S ribosome.

In terms of biological role, this is one of the proteins that bind and probably mediate the attachment of the 5S RNA into the large ribosomal subunit, where it forms part of the central protuberance. In the 70S ribosome it contacts protein S13 of the 30S subunit (bridge B1b), connecting the 2 subunits; this bridge is implicated in subunit movement. Contacts the P site tRNA; the 5S rRNA and some of its associated proteins might help stabilize positioning of ribosome-bound tRNAs. The protein is Large ribosomal subunit protein uL5 of Acaryochloris marina (strain MBIC 11017).